The sequence spans 61 residues: Sperm protamine P1 (61 aa).

The interval 1–61 (MARYRHSRSR…RRYSRRRRRY (61 aa)) is disordered.

Belongs to the protamine P1 family. In terms of tissue distribution, testis.

It is found in the nucleus. It localises to the chromosome. Protamines substitute for histones in the chromatin of sperm during the haploid phase of spermatogenesis. They compact sperm DNA into a highly condensed, stable and inactive complex. This is Sperm protamine P1 (PRM1) from Macropus giganteus (Eastern gray kangaroo).